The following is a 517-amino-acid chain: Glycoprotein (517 aa).

The first 16 residues, 1–16, serve as a signal peptide directing secretion; it reads MLSYLIFALAVSPILG. Topologically, residues 17–474 are virion surface; the sequence is KIEIVFPQHT…FSGWRSSLMG (458 aa). 6 cysteine pairs are disulfide-bonded: Cys40–Cys304, Cys75–Cys108, Cys84–Cys130, Cys169–Cys174, Cys193–Cys240, and Cys235–Cys273. Residues 53 to 172 form a fusion peptide region; it reads TGIPVELTMP…HFIGGRCKGQ (120 aa). An N-linked (GlcNAc...) asparagine; by host glycan is attached at Asn179. Residues 259–313 form a trimerization region; it reads DLDKTVRDLPHIKDCDLSSSIITPGEHATDISLISDVERILDYALCQNTWSKIES. An N-linked (GlcNAc...) asparagine; by host glycan is attached at Asn340. The segment at 387-409 is trimerization; sequence EIGPNGVLKTKQGYKFPLHIIGT. The helical transmembrane segment at 475-495 threads the bilayer; it reads VLAVIIGFVILMFLIKLIGVL. Residues 496-517 are Intravirion-facing; it reads SSLFRPKRRPIYKSDVEMAHFR.

Belongs to the vesiculovirus glycoprotein family. As to quaternary structure, homotrimer. Interacts with host LDL at target cell surface. Post-translationally, glycosylated by host. Palmitoylated by host.

Its subcellular location is the virion membrane. The protein resides in the host membrane. Functionally, attaches the virus to host LDL receptors, inducing clathrin-dependent endocytosis of the virion. In the endosome, the acidic pH induces conformational changes in the glycoprotein trimer, which trigger fusion between virus and endosomal membrane. This Aedes (Bovine) protein is Glycoprotein (G).